The chain runs to 294 residues: NAD kinase (294 aa).

Asp-73 serves as the catalytic Proton acceptor. Residues 73 to 74, 147 to 148, His-158, Arg-175, Asp-177, 188 to 193, and Gln-249 contribute to the NAD(+) site; these read DG, NE, and TAYSLS.

It belongs to the NAD kinase family. Requires a divalent metal cation as cofactor.

Its subcellular location is the cytoplasm. The enzyme catalyses NAD(+) + ATP = ADP + NADP(+) + H(+). Its function is as follows. Involved in the regulation of the intracellular balance of NAD and NADP, and is a key enzyme in the biosynthesis of NADP. Catalyzes specifically the phosphorylation on 2'-hydroxyl of the adenosine moiety of NAD to yield NADP. The chain is NAD kinase from Aeromonas salmonicida (strain A449).